We begin with the raw amino-acid sequence, 141 residues long: Cholinesterase (141 aa).

Asparagine 39 is a glycosylation site (N-linked (GlcNAc...) asparagine). Residue 49 to 50 (GG) participates in substrate binding. Serine 131 serves as the catalytic Acyl-ester intermediate. At serine 131 the chain carries Phosphoserine.

Belongs to the type-B carboxylesterase/lipase family. As to quaternary structure, homotetramer; disulfide-linked. Dimer of dimers. In terms of tissue distribution, present in most cells except erythrocytes.

Its subcellular location is the secreted. The catalysed reaction is an acylcholine + H2O = a carboxylate + choline + H(+). Its function is as follows. Esterase with broad substrate specificity. Contributes to the inactivation of the neurotransmitter acetylcholine. Can degrade neurotoxic organophosphate esters. In Macaca mulatta (Rhesus macaque), this protein is Cholinesterase (BCHE).